Reading from the N-terminus, the 654-residue chain is Import motor subunit, mitochondrial (654 aa).

Residues 1–23 (MLAAKNILNRSSLSSSFRIATRL) constitute a mitochondrion transit peptide. A Phosphothreonine modification is found at Thr-330. The segment at 629–654 (EQLYKNDSNNNNNNNGNNAESGETKQ) is disordered. The span at 637–646 (NNNNNNNGNN) shows a compositional bias: low complexity.

Belongs to the heat shock protein 70 family. Component of the PAM complex, at least composed of SSC1 (mtHsp70), MGE1, TIM44, PAM16/TIM16, PAM17 and PAM18/TIM14. In the complex, SSC1 interacts directly with PAM18 and TIM44. Interacts with NAP1.

Its subcellular location is the mitochondrion matrix. The enzyme catalyses ATP + H2O = ADP + phosphate + H(+). Essential component of the PAM complex, a complex required for the translocation of transit peptide-containing proteins from the inner membrane into the mitochondrial matrix in an ATP-dependent manner. Constitutes the ATP-driven core of the motor and binds the precursor preprotein. Required for the import of the processed frataxin homolog YFH1 into the mitochondrion. In Saccharomyces cerevisiae (strain ATCC 204508 / S288c) (Baker's yeast), this protein is Import motor subunit, mitochondrial.